The primary structure comprises 143 residues: Large ribosomal subunit protein uL11 (143 aa).

This sequence belongs to the universal ribosomal protein uL11 family. As to quaternary structure, part of the ribosomal stalk of the 50S ribosomal subunit. Interacts with L10 and the large rRNA to form the base of the stalk. L10 forms an elongated spine to which L12 dimers bind in a sequential fashion forming a multimeric L10(L12)X complex. In terms of processing, one or more lysine residues are methylated.

In terms of biological role, forms part of the ribosomal stalk which helps the ribosome interact with GTP-bound translation factors. The protein is Large ribosomal subunit protein uL11 of Paraburkholderia phymatum (strain DSM 17167 / CIP 108236 / LMG 21445 / STM815) (Burkholderia phymatum).